The primary structure comprises 368 residues: Probable leucine aminopeptidase TRV_05750 (368 aa).

The signal sequence occupies residues 1-18 (MKVFAIAAVAALTAVAVA). An N-linked (GlcNAc...) asparagine glycan is attached at asparagine 92. Zn(2+) contacts are provided by histidine 172 and aspartate 191. 2 N-linked (GlcNAc...) asparagine glycosylation sites follow: asparagine 192 and asparagine 216. Zn(2+)-binding residues include glutamate 230 and aspartate 257. An intrachain disulfide couples cysteine 301 to cysteine 305. Zn(2+) is bound at residue histidine 334.

Belongs to the peptidase M28 family. M28E subfamily. In terms of assembly, monomer. Zn(2+) is required as a cofactor.

The protein resides in the secreted. Its function is as follows. Probable extracellular aminopeptidase which contributes to pathogenicity. The polypeptide is Probable leucine aminopeptidase TRV_05750 (Trichophyton verrucosum (strain HKI 0517)).